The chain runs to 1837 residues: Zinc finger SWIM domain-containing protein 8 (1837 aa).

3 positions are modified to phosphoserine: Ser36, Ser48, and Ser53. The disordered stretch occupies residues 45 to 65 (RKQSAGPNSPTGGGGGGGSGG). The segment covering 55-65 (TGGGGGGGSGG) has biased composition (gly residues). The segment at 172 to 208 (YNVAVMFDRCRVTSCSCTCGAGAKWCTHVVALCLFRI) adopts an SWIM-type zinc-finger fold. The residue at position 437 (Ser437) is a Phosphoserine. Disordered regions lie at residues 514-727 (SRPG…EEDD), 803-823 (NPPD…KVST), and 1016-1232 (SQTH…VPNQ). 2 stretches are compositionally biased toward basic and acidic residues: residues 523-532 (GLEESRDRPR) and 566-575 (LSAEGGDKAL). Ser567 is modified (phosphoserine). A compositionally biased stretch (gly residues) spans 579–602 (GPGGGKAKALGGAGSGSKGSAGGG). A compositionally biased stretch (polar residues) spans 1019-1040 (HKPQTLSSFYSSSRPTTASQRS). Gly residues predominate over residues 1119 to 1130 (SRGGYNGRGWGS). Position 1139 is a phosphothreonine (Thr1139). The span at 1144–1159 (IDSSAPETTSDSSPTL) shows a compositional bias: polar residues. Phosphoserine is present on residues Ser1153, Ser1156, and Ser1160. Positions 1174 to 1209 (GRGQDSDSISSSSSDSLGSSSSSGSRRASASGGARA) are enriched in low complexity. A compositionally biased stretch (basic and acidic residues) spans 1210 to 1226 (KTVEVGRYKGRRPESHA). Ser1267 carries the phosphoserine modification. Disordered stretches follow at residues 1442-1464 (SASG…GGPG) and 1635-1656 (QPSP…SQPV). Over residues 1447–1464 (RAGGEAGRGMPEGRGGPG) the composition is skewed to gly residues. Phosphoserine is present on Ser1836.

This sequence belongs to the ZSWIM8 family. Component of the SCF-like E3 ubiquitin-protein ligase complex which contains CUL3, RBX1, ELOB, ELOC and ZSWIM8. As to quaternary structure, (Microbial infection) Interacts with Zika virus protein NS5; this interaction allows STAT2 binding and subsequent proteasomal degradation.

The protein resides in the cytoplasm. The protein localises to the cytosol. It participates in protein modification; protein ubiquitination. Its function is as follows. Substrate recognition component of a SCF-like E3 ubiquitin-protein ligase complex that promotes target-directed microRNA degradation (TDMD), a process that mediates degradation of microRNAs (miRNAs). The SCF-like E3 ubiquitin-protein ligase complex acts by catalyzing ubiquitination and subsequent degradation of AGO proteins (AGO1, AGO2, AGO3 and/or AGO4), thereby exposing miRNAs for degradation. Specifically recognizes and binds AGO proteins when they are engaged with a TDMD target. May also act as a regulator of axon guidance: specifically recognizes misfolded ROBO3 and promotes its ubiquitination and subsequent degradation. Plays an essential role for proper embryonic development of heart and lung. Controls protein quality of DAB1, a key signal molecule for brain development, thus protecting its signaling strength. Mechanistically, recognizes intrinsically disordered regions of DAB1 and eliminates misfolded DAB1 that cannot be properly phosphorylated. In terms of biological role, (Microbial infection) Participates in Zika virus inhibition of IFN signaling by acting as a scaffold protein to connect ZSWIM8/CUL3 ligase complex and STAT2, leading to STAT2 degradation. The chain is Zinc finger SWIM domain-containing protein 8 from Homo sapiens (Human).